Consider the following 256-residue polypeptide: Small ribosomal subunit protein uS2 (256 aa).

The protein belongs to the universal ribosomal protein uS2 family.

The sequence is that of Small ribosomal subunit protein uS2 from Geotalea uraniireducens (strain Rf4) (Geobacter uraniireducens).